Here is a 451-residue protein sequence, read N- to C-terminus: Probable phosphoglucosamine mutase (451 aa).

Ser-96 serves as the catalytic Phosphoserine intermediate. Residues Ser-96, Asp-233, Asp-235, and Asp-237 each coordinate Mg(2+). Position 96 is a phosphoserine (Ser-96).

Belongs to the phosphohexose mutase family. Requires Mg(2+) as cofactor. Post-translationally, activated by phosphorylation.

The catalysed reaction is alpha-D-glucosamine 1-phosphate = D-glucosamine 6-phosphate. Catalyzes the conversion of glucosamine-6-phosphate to glucosamine-1-phosphate. This Pyrococcus abyssi (strain GE5 / Orsay) protein is Probable phosphoglucosamine mutase.